Consider the following 618-residue polypeptide: Chaperone protein dnaK (618 aa).

Residues 595-618 (SKTETTTPNKNEEDVIDASFSEEK) are disordered.

It belongs to the heat shock protein 70 family.

It localises to the plastid. The protein resides in the cyanelle. Functionally, acts as a chaperone. This is Chaperone protein dnaK (dnaK-A) from Cyanophora paradoxa.